Consider the following 190-residue polypeptide: Superoxide dismutase [Fe] (190 aa).

4 residues coordinate Fe cation: His-27, His-75, Asp-156, and His-160.

This sequence belongs to the iron/manganese superoxide dismutase family. Homodimer. The cofactor is Fe cation.

The enzyme catalyses 2 superoxide + 2 H(+) = H2O2 + O2. Its function is as follows. Destroys superoxide anion radicals which are normally produced within the cells and which are toxic to biological systems. The sequence is that of Superoxide dismutase [Fe] (SODB) from Entamoeba histolytica (strain ATCC 30459 / HM-1:IMSS / ABRM).